A 541-amino-acid polypeptide reads, in one-letter code: Formimidoyltransferase-cyclodeaminase (541 aa).

The tract at residues 1–181 (MAKLVECVPN…GATVTGARTF (181 aa)) is formiminotransferase N-subdomain. His82 functions as the For formimidoyltransferase activity in the catalytic mechanism. 163–172 (GPPAFVPQWG) is a folate binding site. The formiminotransferase C-subdomain stretch occupies residues 182-326 (LIAYNINLLC…PRERIIEYLV (145 aa)). Residues 327-334 (QAGQEDKG) form a linker region. A cyclodeaminase/cyclohydrolase region spans residues 335 to 541 (LVTKPLGAFV…VLALLEKREA (207 aa)). Asp412 serves as the catalytic For cyclodeaminase activity.

It in the C-terminal section; belongs to the cyclodeaminase/cyclohydrolase family. In the N-terminal section; belongs to the formiminotransferase family. As to quaternary structure, homooctamer, including four polyglutamate binding sites. The subunits are arranged as a tetramer of dimers, and form a planar ring-shaped structure.

Its subcellular location is the cytoplasm. It is found in the cytosol. The protein resides in the golgi apparatus. It localises to the cytoskeleton. The protein localises to the microtubule organizing center. Its subcellular location is the centrosome. It is found in the centriole. It catalyses the reaction 5-formimidoyltetrahydrofolate + L-glutamate = N-formimidoyl-L-glutamate + (6S)-5,6,7,8-tetrahydrofolate. The catalysed reaction is 5-formimidoyltetrahydrofolate + 2 H(+) = (6R)-5,10-methenyltetrahydrofolate + NH4(+). The protein operates within amino-acid degradation; L-histidine degradation into L-glutamate; L-glutamate from N-formimidoyl-L-glutamate (transferase route): step 1/1. In terms of biological role, folate-dependent enzyme, that displays both transferase and deaminase activity. Serves to channel one-carbon units from formiminoglutamate to the folate pool. Binds and promotes bundling of vimentin filaments originating from the Golgi. This chain is Formimidoyltransferase-cyclodeaminase (FTCD), found in Gallus gallus (Chicken).